A 610-amino-acid polypeptide reads, in one-letter code: Dihydroxy-acid dehydratase (610 aa).

Asp81 is a binding site for Mg(2+). Position 122 (Cys122) interacts with [2Fe-2S] cluster. Asp123 and Lys124 together coordinate Mg(2+). At Lys124 the chain carries N6-carboxylysine. Cys193 lines the [2Fe-2S] cluster pocket. Glu489 contacts Mg(2+). Residue Ser515 is the Proton acceptor of the active site.

It belongs to the IlvD/Edd family. As to quaternary structure, homodimer. It depends on [2Fe-2S] cluster as a cofactor. Mg(2+) serves as cofactor.

It carries out the reaction (2R)-2,3-dihydroxy-3-methylbutanoate = 3-methyl-2-oxobutanoate + H2O. The catalysed reaction is (2R,3R)-2,3-dihydroxy-3-methylpentanoate = (S)-3-methyl-2-oxopentanoate + H2O. It functions in the pathway amino-acid biosynthesis; L-isoleucine biosynthesis; L-isoleucine from 2-oxobutanoate: step 3/4. It participates in amino-acid biosynthesis; L-valine biosynthesis; L-valine from pyruvate: step 3/4. Functionally, functions in the biosynthesis of branched-chain amino acids. Catalyzes the dehydration of (2R,3R)-2,3-dihydroxy-3-methylpentanoate (2,3-dihydroxy-3-methylvalerate) into 2-oxo-3-methylpentanoate (2-oxo-3-methylvalerate) and of (2R)-2,3-dihydroxy-3-methylbutanoate (2,3-dihydroxyisovalerate) into 2-oxo-3-methylbutanoate (2-oxoisovalerate), the penultimate precursor to L-isoleucine and L-valine, respectively. This chain is Dihydroxy-acid dehydratase, found in Xylella fastidiosa (strain M12).